The chain runs to 183 residues: Microfibrillar-associated protein 2 (183 aa).

Residues 1 to 16 (MRAACLFLLFMPGLLA) constitute a signal peptide (or 18). A Pyrrolidone carboxylic acid modification is found at Gln-17. Tyr-46, Tyr-47, and Tyr-49 each carry sulfotyrosine. The segment at 52–92 (VSPRTPEEQFQSQQQVQQEVIPAPTPEPAAAGDLETEPTEP) is disordered. Over residues 59 to 70 (EQFQSQQQVQQE) the composition is skewed to low complexity. A ShKT domain is found at 153–183 (CRDKFSKCGVMAVSGLCQSVAASCARSCGGC). 3 disulfide bridges follow: Cys-153–Cys-183, Cys-160–Cys-176, and Cys-169–Cys-180.

It belongs to the MFAP family. In terms of assembly, forms a ternary complex with BGN and ELN. Interacts with FBN1 (via N-terminal domain) and FBN2. In terms of processing, forms intermolecular disulfide bonds either with other MAGP-1 molecules or with other components of the microfibrils. May form transglutaminase cross-links. O-glycosylated.

It is found in the secreted. It localises to the extracellular space. The protein localises to the extracellular matrix. In terms of biological role, component of the elastin-associated microfibrils. This is Microfibrillar-associated protein 2 (Mfap2) from Mus musculus (Mouse).